A 659-amino-acid chain; its full sequence is DNA mismatch repair protein MutL (659 aa).

This sequence belongs to the DNA mismatch repair MutL/HexB family.

Functionally, this protein is involved in the repair of mismatches in DNA. It is required for dam-dependent methyl-directed DNA mismatch repair. May act as a 'molecular matchmaker', a protein that promotes the formation of a stable complex between two or more DNA-binding proteins in an ATP-dependent manner without itself being part of a final effector complex. The chain is DNA mismatch repair protein MutL from Ligilactobacillus salivarius (strain UCC118) (Lactobacillus salivarius).